Reading from the N-terminus, the 313-residue chain is R2-like ligand binding oxidase (313 aa).

Residues Glu68, Glu101, and His104 each coordinate Mn(2+). The segment at residues 71–162 (VTQDIQPFMS…AAQVRASVTY (92 aa)) is a cross-link (3-(O4'-tyrosyl)-valine (Val-Tyr)). Residue Glu101 participates in Fe cation binding. Residues Glu167, Glu202, and His205 each contribute to the Fe cation site.

It belongs to the ribonucleoside diphosphate reductase small chain family. R2-like ligand binding oxidase subfamily. In terms of assembly, homodimer. It depends on Fe cation as a cofactor. Mn(2+) serves as cofactor.

Its function is as follows. Probable oxidase that might be involved in lipid metabolism. The protein is R2-like ligand binding oxidase of Mycobacteroides abscessus (strain ATCC 19977 / DSM 44196 / CCUG 20993 / CIP 104536 / JCM 13569 / NCTC 13031 / TMC 1543 / L948) (Mycobacterium abscessus).